We begin with the raw amino-acid sequence, 320 residues long: Endochitinase (320 aa).

Positions 1–23 (MKRTLKVSFFILCLLPLFLGSKA) are cleaved as a signal peptide. The region spanning 24-64 (EQCGSQAGGAVCPNGLCCSKFGFCGSTDPYCGDGCQSQCKS) is the Chitin-binding type-1 domain. 7 cysteine pairs are disulfide-bonded: Cys26–Cys41, Cys35–Cys47, Cys40–Cys54, Cys58–Cys62, Cys101–Cys163, Cys175–Cys182, and Cys281–Cys313. Glu145 (proton donor) is an active-site residue.

It belongs to the glycosyl hydrolase 19 family. Chitinase class I subfamily.

It carries out the reaction Random endo-hydrolysis of N-acetyl-beta-D-glucosaminide (1-&gt;4)-beta-linkages in chitin and chitodextrins.. Defense against chitin-containing fungal pathogens. The polypeptide is Endochitinase (Pisum sativum (Garden pea)).